A 273-amino-acid chain; its full sequence is Tyrosinase (273 aa).

The signal sequence occupies residues 1-18; the sequence is MCLLALGFLLGILQPASG. 2 N-linked (GlcNAc...) asparagine glycosylation sites follow: asparagine 86 and asparagine 169. Residues histidine 180, histidine 202, and histidine 211 each coordinate Cu cation. Asparagine 230 carries an N-linked (GlcNAc...) asparagine glycan.

The protein belongs to the tyrosinase family. Cu(2+) is required as a cofactor.

Its subcellular location is the melanosome membrane. It catalyses the reaction 2 L-dopa + O2 = 2 L-dopaquinone + 2 H2O. It carries out the reaction L-tyrosine + O2 = L-dopaquinone + H2O. Functionally, this is a copper-containing oxidase that functions in the formation of pigments such as melanins and other polyphenolic compounds. The protein is Tyrosinase (TYR) of Pelodiscus sinensis (Chinese softshell turtle).